Here is a 315-residue protein sequence, read N- to C-terminus: MTGQGHSASGSSAWSTVFRHVRYENLVAGVSGGVLSNLALHPLDLVKIRFAVSDGLELRPKYNGILHCLTTIWKLDGLRGLYQGVTPNVWGAGLSWGLYFFFYNAIKSYKTEGRAERLEATEYLVSAAEAGAMTLCITNPLWVTKTRLMLQYDAVINSPHRQYKGMFDTLVKIYKYEGVRGLYKGFVPGLFGTSHGALQFMAYELLKLKYNQHINRLPEAQLSTVEYISVAALSKIFAVAATYPYQVVRARLQDQHMFYSGVIDVITKTWRKEGIGGFYKGIAPNLIRVTPACCITFVVYENVSHFLLDLREKRK.

Solcar repeat units lie at residues 20 to 109, 118 to 209, and 222 to 306; these read HVRY…IKSY, LEAT…LKLK, and LSTV…VSHF. Helical transmembrane passes span 26 to 43, 89 to 106, 123 to 143, 186 to 203, 227 to 243, and 281 to 300; these read LVAGVSGGVLSNLALHPL, VWGAGLSWGLYFFFYNAI, YLVSAAEAGAMTLCITNPLWV, FVPGLFGTSHGALQFMAY, YISVAALSKIFAVAATY, and GIAPNLIRVTPACCITFVVY.

The protein belongs to the mitochondrial carrier (TC 2.A.29) family.

It is found in the mitochondrion inner membrane. It catalyses the reaction FAD(in) = FAD(out). Functionally, facilitates flavin adenine dinucleotide (FAD) translocation across the mitochondrial inner membrane into the mitochondrial matrix where it acts as a redox cofactor to assist flavoenzyme activities in fundamental metabolic processes including fatty acid beta-oxidation, amino acid and choline metabolism as well as mitochondrial electron transportation. In particular, provides FAD to DLD dehydrogenase of the glycine cleavage system, part of mitochondrial one-carbon metabolic pathway involved in neural tube closure in early embryogenesis. The chain is Solute carrier family 25 member 32 from Macaca fascicularis (Crab-eating macaque).